The primary structure comprises 348 residues: Anthranilate phosphoribosyltransferase (348 aa).

5-phospho-alpha-D-ribose 1-diphosphate is bound by residues Gly81, 84–85, 91–94, 109–117, and Ser121; these read GD, NVST, and KHGNRAVSG. Position 81 (Gly81) interacts with anthranilate. Ser93 is a binding site for Mg(2+). Asn112 is a binding site for anthranilate. Arg167 is an anthranilate binding site. The Mg(2+) site is built by Asp226 and Glu227.

This sequence belongs to the anthranilate phosphoribosyltransferase family. As to quaternary structure, homodimer. Mg(2+) is required as a cofactor.

It catalyses the reaction N-(5-phospho-beta-D-ribosyl)anthranilate + diphosphate = 5-phospho-alpha-D-ribose 1-diphosphate + anthranilate. The protein operates within amino-acid biosynthesis; L-tryptophan biosynthesis; L-tryptophan from chorismate: step 2/5. Its function is as follows. Catalyzes the transfer of the phosphoribosyl group of 5-phosphorylribose-1-pyrophosphate (PRPP) to anthranilate to yield N-(5'-phosphoribosyl)-anthranilate (PRA). In Azotobacter vinelandii (strain DJ / ATCC BAA-1303), this protein is Anthranilate phosphoribosyltransferase.